The chain runs to 387 residues: V-set and immunoglobulin domain-containing protein 1 (387 aa).

A signal peptide spans 1–21 (MVFAFWKVFLILSCLAGQVSV). Residues 22-132 (VQVTIPDGFV…DFLGQNQGIL (111 aa)) enclose the Ig-like V-type domain. Residues 22-232 (VQVTIPDGFV…EIDLTSSHPE (211 aa)) are Extracellular-facing. Residues asparagine 32 and asparagine 38 are each glycosylated (N-linked (GlcNAc...) asparagine). A disulfide bridge links cysteine 43 with cysteine 116. N-linked (GlcNAc...) asparagine glycosylation is found at asparagine 133, asparagine 200, and asparagine 219. In terms of domain architecture, Ig-like C2-type spans 140–227 (PSKPLCSVQG…GNSSCEIDLT (88 aa)). A disulfide bridge links cysteine 161 with cysteine 211. Residues 233 to 253 (VGIIVGALIGSLVGAAIIISV) form a helical membrane-spanning segment. Over 254–387 (VCFARNKAKA…SEDEKGVVKA (134 aa)) the chain is Cytoplasmic. The segment at 266-387 (KERNSKTIAE…SEDEKGVVKA (122 aa)) is disordered. Over residues 284 to 296 (PRGESEAMPREDA) the composition is skewed to basic and acidic residues. Residues 299 to 308 (LEVTLPSSIH) show a composition bias toward polar residues. Residues 325 to 335 (TQEPAPEPAPG) show a composition bias toward pro residues. The span at 344–368 (LDIELELEPETQSELEPEPEPEPES) shows a compositional bias: acidic residues.

Post-translationally, highly N-glycosylated. Appears not to contain significant amounts of O-linked carbohydrates or sialic acid in its sugar moieties. As to expression, detected only in stomach mucosa and testis, and to a much lesser level in pancreas (at protein level). Detected in gastric cancers (31%), esophageal carcinomas (50%) and ovarian cancers (23%).

It is found in the membrane. In Homo sapiens (Human), this protein is V-set and immunoglobulin domain-containing protein 1 (VSIG1).